A 193-amino-acid polypeptide reads, in one-letter code: Transmembrane protein 276 (193 aa).

An N-terminal signal peptide occupies residues 1-32 (MTPRPGGEWSSALSHLALGAVSLHAALSTAQA). 4 helical membrane passes run 35–55 (GAAAGFLLQALATATMLASGL), 63–83 (AGAWVATVIGLPLLAFDFHWV), 89–109 (SANLLLGGGMVLAVAGDHLGA), and 114–134 (VAGQAVVLVVAVTILIVAVFT).

It localises to the membrane. This Bos taurus (Bovine) protein is Transmembrane protein 276.